The following is a 236-amino-acid chain: Small ribosomal subunit protein uS3 (236 aa).

The 69-residue stretch at 39 to 107 (IRKFLKKELY…EISINIKEVK (69 aa)) folds into the KH type-2 domain. Residues 213 to 229 (QPEKKEEAPARDKEGRG) show a composition bias toward basic and acidic residues. A disordered region spans residues 213-236 (QPEKKEEAPARDKEGRGTRRRGRQ).

This sequence belongs to the universal ribosomal protein uS3 family. As to quaternary structure, part of the 30S ribosomal subunit. Forms a tight complex with proteins S10 and S14.

In terms of biological role, binds the lower part of the 30S subunit head. Binds mRNA in the 70S ribosome, positioning it for translation. The protein is Small ribosomal subunit protein uS3 of Wolinella succinogenes (strain ATCC 29543 / DSM 1740 / CCUG 13145 / JCM 31913 / LMG 7466 / NCTC 11488 / FDC 602W) (Vibrio succinogenes).